The primary structure comprises 195 residues: Imidazoleglycerol-phosphate dehydratase (195 aa).

This sequence belongs to the imidazoleglycerol-phosphate dehydratase family.

It is found in the cytoplasm. The catalysed reaction is D-erythro-1-(imidazol-4-yl)glycerol 3-phosphate = 3-(imidazol-4-yl)-2-oxopropyl phosphate + H2O. It participates in amino-acid biosynthesis; L-histidine biosynthesis; L-histidine from 5-phospho-alpha-D-ribose 1-diphosphate: step 6/9. This chain is Imidazoleglycerol-phosphate dehydratase, found in Bordetella bronchiseptica (strain ATCC BAA-588 / NCTC 13252 / RB50) (Alcaligenes bronchisepticus).